The primary structure comprises 260 residues: Indole-3-glycerol phosphate synthase (260 aa).

It belongs to the TrpC family.

The catalysed reaction is 1-(2-carboxyphenylamino)-1-deoxy-D-ribulose 5-phosphate + H(+) = (1S,2R)-1-C-(indol-3-yl)glycerol 3-phosphate + CO2 + H2O. It participates in amino-acid biosynthesis; L-tryptophan biosynthesis; L-tryptophan from chorismate: step 4/5. The sequence is that of Indole-3-glycerol phosphate synthase from Staphylococcus aureus (strain COL).